The primary structure comprises 71 residues: uncharacterized protein (71 aa).

This is an uncharacterized protein from Lepidoptera (butterflies and moths).